A 217-amino-acid polypeptide reads, in one-letter code: Tectonin-1 (217 aa).

6 repeat units span residues 2–37 (VHWE…HWDG), 38–74 (HKWH…DRSN), 75–111 (NKWT…DHHH), 112–146 (NKWD…RWDG), 147–182 (SKVD…LKHG), and 183–217 (KDWE…KATL). The segment at 2-217 (VHWEKHEGEL…KLHHIYKATL (216 aa)) is 6 X approximate tandem repeats.

Belongs to the tectonin family.

Its subcellular location is the cell surface. The protein localises to the cytoplasmic vesicle membrane. Its function is as follows. Probably involved in bacterial recognition. May be a lectin that function as part of a transmembrane signaling complex during phagocytosis. The sequence is that of Tectonin-1 (TECA) from Physarum polycephalum (Slime mold).